The sequence spans 729 residues: Serine/threonine-protein kinase TBK1 (729 aa).

One can recognise a Protein kinase domain in the interval 9–310 (WLLSDILGQG…ETSDVLHRMV (302 aa)). 15 to 23 (LGQGATANV) contributes to the ATP binding site. A Glycyl lysine isopeptide (Lys-Gly) (interchain with G-Cter in ubiquitin) cross-link involves residue lysine 30. Lysine 38 provides a ligand contact to ATP. Aspartate 135 (proton acceptor) is an active-site residue. Phosphoserine; by autocatalysis and IKKB is present on serine 172. The Ubiquitin-like domain occupies 309–385 (MVIHVFSLQH…ENPIFVTSRE (77 aa)). A Glycyl lysine isopeptide (Lys-Gly) (interchain with G-Cter in ubiquitin) cross-link involves residue lysine 401. 2 coiled-coil regions span residues 407–657 (DLDG…LQET) and 658–713 (LPQK…ILER). The tract at residues 621-729 (RKMLHLRKQL…DGGLRNVDCL (109 aa)) is interaction with AZI2, TANK and TBKBP1. Residue lysine 670 forms a Glycyl lysine isopeptide (Lys-Gly) (interchain with G-Cter in ubiquitin) linkage. The residue at position 716 (serine 716) is a Phosphoserine.

Belongs to the protein kinase superfamily. Ser/Thr protein kinase family. I-kappa-B kinase subfamily. As to quaternary structure, homodimer. Interacts with DDX3X, TIRAP and TRAF2. Part of a ternary complex consisting of TANK, TRAF2 and TBK1. Interacts with AZI2, TANK and TBKBP1; these interactions are mutually exclusive and mediate TBK1 activation. Interacts with GSK3B; this interaction promotes TBK1 self-association and autophosphorylation. Interacts with SIKE1; SIKE1 is associated with TBK1 under physiological condition and dissociated from TBK1 upon viral infection or TLR3 stimulation. Interacts with IRF3, leading to IRF3 phosphorylation. Interacts with RIGI. Interacts with CYLD. Interacts with OPTN and TRAF3. Interacts with SRC. Interacts with the exocyst complex subunit SEC5/EXOC2; this interaction is sufficient to trigger TBK1 activity. Interacts with STING1, leading to STING1 phosphorylation. Interacts with IFIT3 (via N-terminus). Interacts with MAVS; interaction only takes place in the presence of IFIT3 and leads to MAVS phosphorylation. Interacts (via protein kinase domain) with TTLL12 (via TTL domain); the interaction prevents MAVS binding to TBK1. Interacts with TICAM1; this interaction is enhanced in the presence of WDFY1 and leads to TICAM1 phosphorylation. Interacts with TRIM26. Interacts with TRIM23. Interacts with TTC4 and IKBKE. Interacts with HNRNPA2B1. Interacts with DDX3X. Interacts with TRIM14. Interacts with CEP170; efficient complex formation may be dependent on the presence of CCDC61. Interacts with TRAF3IP3. Interacts with HSP90AA1; the interaction mediates TBK1 association with TOMM70. Interacts with TAX1BP1. Interacts with kinase IKBKB; the complex interacts with STAT1, leading to phosphorylation of STAT1 on 'Thr-748' by IKBKB. Interacts with ICOS; this interaction is critical for the maturation of T follicular regulatory cells. Interacts with RNF144B; this interaction prevents TBK1 phosphorylation and subsequent activation. Interacts with ASB8; this interaction promotes TBK1 proteasomal degradation. Autophosphorylation at Ser-172 activates the kinase, and is an essential step for virus-triggered signaling. Phosphorylated by IKBKB/IKKB at Ser-172. Phosphorylation requires homodimerization and ubiquitination at Lys-30 and Lys-401. Dephosphorylated at Ser-172 by PPM1B and this negatively regulates its role in mediating antiviral response. Post-translationally, 'Lys-63'-linked polyubiquitination by MIB1 after RNA virus infection, or by NRDP1 after LPS stimulation at Lys-30 and Lys-401, participates in kinase activation. 'Lys-48'-linked polyubiquitination at Lys-670 by DTX4 leads to proteasomal degradation. 'Lys-48'-linked polyubiquitination by TRAIP also leads to proteasomal degradation. 'Lys-48'-linked polyubiquitination by TRAF7; leading to proteasomal degradation. 'Lys-63'-linked polyubiquitination by RNF128 at Lys-30 and Lys-401 leads to the activation of antiviral responses. 'Lys-48'-linked polyubiquitination after 'lys-33'-linked deubiquitination by USP38 promotes TBK1 degradation.

It localises to the cytoplasm. It carries out the reaction L-seryl-[protein] + ATP = O-phospho-L-seryl-[protein] + ADP + H(+). It catalyses the reaction L-threonyl-[protein] + ATP = O-phospho-L-threonyl-[protein] + ADP + H(+). With respect to regulation, kinase activity is inhibited competitively by amlexanox. Its function is as follows. Serine/threonine kinase that plays an essential role in regulating inflammatory responses to foreign agents. Following activation of toll-like receptors by viral or bacterial components, associates with TRAF3 and TANK and phosphorylates interferon regulatory factors (IRFs) IRF3 and IRF7 as well as DDX3X. This activity allows subsequent homodimerization and nuclear translocation of the IRFs leading to transcriptional activation of pro-inflammatory and antiviral genes including IFNA and IFNB. In order to establish such an antiviral state, TBK1 form several different complexes whose composition depends on the type of cell and cellular stimuli. Thus, several scaffolding molecules including FADD, TRADD, MAVS, AZI2, TANK or TBKBP1/SINTBAD can be recruited to the TBK1-containing-complexes. Plays a key role in IRF3 activation: acts by first phosphorylating innate adapter proteins MAVS, STING1 and TICAM1 on their pLxIS motif, leading to recruitment of IRF3, thereby licensing IRF3 for phosphorylation by TBK1. Under particular conditions, functions as a NF-kappa-B effector by phosphorylating NF-kappa-B inhibitor alpha/NFKBIA, IKBKB or RELA to translocate NF-Kappa-B to the nucleus. Restricts bacterial proliferation by phosphorylating the autophagy receptor OPTN/Optineurin on 'Ser-177', thus enhancing LC3 binding affinity and antibacterial autophagy. Phosphorylates SMCR8 component of the C9orf72-SMCR8 complex, promoting autophagosome maturation. Phosphorylates ATG8 proteins MAP1LC3C and GABARAPL2, thereby preventing their delipidation and premature removal from nascent autophagosomes. Seems to play a role in energy balance regulation by sustaining a state of chronic, low-grade inflammation in obesity, which leads to a negative impact on insulin sensitivity. Acts both as a positive and negative regulator of the mTORC1 complex, depending on the context: activates mTORC1 in response to growth factors by catalyzing phosphorylation of MTOR, while it limits the mTORC1 complex by promoting phosphorylation of RPTOR. Acts as a positive regulator of the mTORC2 complex by mediating phosphorylation of MTOR, leading to increased phosphorylation and activation of AKT1. Phosphorylates and activates AKT1. Involved in the regulation of TNF-induced RIPK1-mediated cell death, probably acting via CYLD phosphorylation that in turn controls RIPK1 ubiquitination status. Also participates in the differentiation of T follicular regulatory cells together with the receptor ICOS. The polypeptide is Serine/threonine-protein kinase TBK1 (Mus musculus (Mouse)).